We begin with the raw amino-acid sequence, 366 residues long: MLIWLVELADHFQFFNLFRYITFRTGAALFTSALIVFLFGPAMIASLRIRQGKGQPIRADGPQTHFKKAGTPTMGGLMILAGIVVSSLLWADLSSIYVVSTLLVTLGFGAIGFYDDYLKVTKQSDKGFSGKARLGIEFVIASIAVFFMMQAALSAGAAGSTFGSSVTFPFFKDLMLNLGYFFVLFGGFVIVGAGNSVNLTDGLDGLAIVPVMIASAAFGLIAYLAGNAVFANYLQIHFVPGTGELAVILGAVIGAGLGFLWFNAPPAAIFMGDTGSLALGGLIGTVAVATKHEIVMVIIGGLFVMETLSVIIQVFWFKRTGHRVFLMAPIHHHFEKKGWTESQVVIRFWIIAVILAMVGLSTLKLR.

The next 10 membrane-spanning stretches (helical) occupy residues 27–47 (AALF…IASL), 71–91 (TPTM…LLWA), 93–113 (LSSI…AIGF), 138–158 (FVIA…AGAA), 174–194 (LMLN…VGAG), 205–225 (GLAI…AYLA), 245–265 (LAVI…FNAP), 268–288 (AIFM…TVAV), 297–317 (VIIG…VFWF), and 343–363 (QVVI…LSTL).

This sequence belongs to the glycosyltransferase 4 family. MraY subfamily. Mg(2+) serves as cofactor.

It localises to the cell inner membrane. It catalyses the reaction UDP-N-acetyl-alpha-D-muramoyl-L-alanyl-gamma-D-glutamyl-meso-2,6-diaminopimeloyl-D-alanyl-D-alanine + di-trans,octa-cis-undecaprenyl phosphate = di-trans,octa-cis-undecaprenyl diphospho-N-acetyl-alpha-D-muramoyl-L-alanyl-D-glutamyl-meso-2,6-diaminopimeloyl-D-alanyl-D-alanine + UMP. The protein operates within cell wall biogenesis; peptidoglycan biosynthesis. Its function is as follows. Catalyzes the initial step of the lipid cycle reactions in the biosynthesis of the cell wall peptidoglycan: transfers peptidoglycan precursor phospho-MurNAc-pentapeptide from UDP-MurNAc-pentapeptide onto the lipid carrier undecaprenyl phosphate, yielding undecaprenyl-pyrophosphoryl-MurNAc-pentapeptide, known as lipid I. This chain is Phospho-N-acetylmuramoyl-pentapeptide-transferase, found in Sinorhizobium medicae (strain WSM419) (Ensifer medicae).